The following is an 87-amino-acid chain: Insulin-related peptide 1 (87 aa).

A signal peptide spans 1-19; that stretch reads MKSFMVFVLIFACFSCYYA. Positions 20 to 44 are excised as a propeptide; it reads QESTNFYCGRTLSRALAVLCYGAES. Arginine 64 bears the Arginine amide mark. The propeptide occupies 68–87; it reads GPVDECCEKACSIQELMTYC.

This sequence belongs to the insulin family. In terms of tissue distribution, DAGWWIPQHGHHALAGVR-amide: Expressed in corpora cardiaca (CC), corpora allata (CA), antennal lobe (AL) and gnathal ganglion (GNG) (at protein level). Expression in CC and CA detected in most animals, in AL and GNG in few animals (at protein level).

The protein localises to the secreted. The protein is Insulin-related peptide 1 of Agrotis ipsilon (Black cutworm moth).